The following is a 459-amino-acid chain: Acetyltransferase pigO (459 aa).

Belongs to the trichothecene O-acetyltransferase family.

Its pathway is secondary metabolite biosynthesis. Functionally, acetyltransferase; part of the gene cluster that mediates the biosynthesis of azaphilone pigments (MonAzPs), a complex mixture of compounds with a common azaphilone skeleton very widely used as food colorants. PigM and pigO are involved in the elimination of the omega-1 alcohol with pigM acting as an O-acetyltransferase that synthesizes the O-11 acetyl intermediate whereas pigO eliminates acetic acid to yield an intermediate with a C10(11) double bond. The first step of the pathway is performed by the nrPKS pigA that forms the hexaketide precursor from successive condensations of five malonyl-CoA units, with a simple acetyl-CoA starter unit. The role of esterase pigG is not clear, but it may play at most a supplementary role in the formation of the benzaldehyde produced by the pigA nrPKS. This very reactive benzaldehyde is intercepted by the pigC ketoreductase that to provide the first stable enzyme-free MonAzPs intermediate, 6-(4-hydroxy-2-oxopentyl)-3-methyl-2,4-dioxocyclohexane carbaldehyde, also known as M7PKS-1. The FAD-dependent monooxygenase pigN hydroxylates M7PKS-1 at C-4, which triggers the formation of the pyran ring. PigJ, pigK and pigD are involved in the acetylation of the pyran ring. PigJ and pigK form the two subunits of a dedicated fungal FAS that produces the side chain fatty acyl moiety of MonAzPs and pigD transfers the fatty acyl chain to the C-4 alcohol. PigM and pigO are involved in the elimination of the omega-1 alcohol. PigM acts as an O-acetyltransferase that synthesizes the putative O-11 acetyl intermediate whereas pigO eliminates acetic acid to yield an intermediate with a C10(11) double bond. The dehydration of the C-11 alcohol followed by the reduction of the C6(7) double bond by the NAD(P)H-dependent oxidoreductase pigE increases the electrophilicity of the C-5 ketone of the resulting acyl benzopyran. This in turn sets up the C-5 ketone for an intramolecular Knoevenagel aldol condensation with the C-20 enol of the side chain. This condensation affords the characteristic linear tricyclic carbon skeletons of the yellow pigments that serve as the common precursors for the classical yellow pigments monascin and ankaflavin, orange pigments rubopunctatin and monascorubrin, and red pigments ribropunctamine and monascorubramine. The FAD-dependent oxidoreductase pigF is especially invoved in the biosynthesis of orange and red pigments via desaturation of C6(7). This chain is Acetyltransferase pigO, found in Monascus ruber (Mold).